A 193-amino-acid chain; its full sequence is Regulator of free ubiquitin chains 1 (193 aa).

It belongs to the RFU1 family.

It is found in the endosome. Its function is as follows. Inhibitor of the DOA4 deubiquitinase involved in the regulation of protein degradation by the proteasome and maintenance of a normal level of free ubiquitin. The protein is Regulator of free ubiquitin chains 1 (RFU1) of Eremothecium gossypii (strain ATCC 10895 / CBS 109.51 / FGSC 9923 / NRRL Y-1056) (Yeast).